A 358-amino-acid chain; its full sequence is 3-dehydroquinate synthase (358 aa).

Residues 105-109 (GVVGD), 129-130 (TT), Lys-142, Lys-151, and 169-172 (TLKT) contribute to the NAD(+) site. Zn(2+) contacts are provided by Glu-184, His-245, and His-262.

The protein belongs to the sugar phosphate cyclases superfamily. Dehydroquinate synthase family. NAD(+) is required as a cofactor. It depends on Co(2+) as a cofactor. Zn(2+) serves as cofactor.

It localises to the cytoplasm. The enzyme catalyses 7-phospho-2-dehydro-3-deoxy-D-arabino-heptonate = 3-dehydroquinate + phosphate. Its pathway is metabolic intermediate biosynthesis; chorismate biosynthesis; chorismate from D-erythrose 4-phosphate and phosphoenolpyruvate: step 2/7. Functionally, catalyzes the conversion of 3-deoxy-D-arabino-heptulosonate 7-phosphate (DAHP) to dehydroquinate (DHQ). This chain is 3-dehydroquinate synthase, found in Enterococcus faecalis (strain ATCC 700802 / V583).